The following is a 627-amino-acid chain: MFFINFKKIKKKQFPIYLTQHRIITVFLIFIYFINLKDCFHINNSRILSDVDKHRGLYYNIPKCNVCHKCSICTHENGEAQNVIPMVAIPSKRKHIQDINKEREENKYPLHIFEEKDIYNNKDNVVKKEDIYKLRKKKKQKKNCLNFLEKDTMFLSPSHDKETFHINHMNKIKDEKYKQEYEEEKEIYDNTNTSQEKNETNNEQNLNINLINNDKVTLPLQQLEDSQYVGYIQIGTPPQTIRPIFDTGSTNIWIVSTKCKDETCLKVHRYNHKLSSSFKYYEPHTNLDIMFGTGIIQGVIGVETFKIGPFEIKNQSFGLVKREKASDNKSNVFERINFEGIVGLAFPEMLSTGKSTLYENLMSSYKLQHNEFSIYIGKDSKYSALIFGGVDKNFFEGDIYMFPVVKEYYWEIHFDGLYIDHQKFCCGVNSIVYDLKKKDQENNKLFFTRKYFRKNKFKTHLRKYLLKKIKHQKKQKHSNHKKKKLNKKKNYLIFDSGTSFNSVPKDEIEYFFRVVPSKKCDDSNIDQVVSSYPNLTYVINKMPFTLTPSQYLVRKNDMCKPAFMEIEVSSEYGHAYILGNATFMRYYYTVYRRGNNNNSSYVGIAKAVHTEENEKYLSSLHNKINNL.

The Cytoplasmic segment spans residues 1–13 (MFFINFKKIKKKQ). A helical; Signal-anchor for type II membrane protein transmembrane segment spans residues 14 to 34 (FPIYLTQHRIITVFLIFIYFI). At 35-627 (NLKDCFHINN…SSLHNKINNL (593 aa)) the chain is on the lumenal side. Residues 228–605 (YVGYIQIGTP…NNNSSYVGIA (378 aa)) enclose the Peptidase A1 domain. Catalysis depends on residues Asp246 and Asp495.

This sequence belongs to the peptidase A1 family. In terms of processing, autocleaved into a p55 mature form.

The protein localises to the membrane. It localises to the cytoplasmic vesicle. Its subcellular location is the secretory vesicle. It is found in the rhoptry. Its activity is regulated as follows. Inhibited by small molecule 49c. Inhibited by small molecule WM382. Its function is as follows. During the asexual blood stage, initiates the proteolytic maturation of several rhoptry proteins and thus, is required for merozoite invasion of host erythrocytes and probably the subsequent development of the ring-stage. Cleaves rhoptry associated protein 1 RAP1 and apical sushi protein ASP during schizont maturation. Also cleaves rhoptry protein RON3. The polypeptide is Plasmepsin IX (Plasmodium falciparum (isolate 3D7)).